Consider the following 293-residue polypeptide: Delta(3,5)-Delta(2,4)-dienoyl-CoA isomerase, mitochondrial (293 aa).

Substrate-binding positions include 84-88 (AGLNL) and G142.

Belongs to the enoyl-CoA hydratase/isomerase family.

Its subcellular location is the mitochondrion. It carries out the reaction (3E,5Z)-octadienoyl-CoA = (2E,4E)-octadienoyl-CoA. The catalysed reaction is (3E,5Z,8Z,11Z,14Z)-eicosapentaenoyl-CoA = (2E,4E,8Z,11Z,14Z)-eicosapentaenoyl-CoA. Its pathway is lipid metabolism; fatty acid beta-oxidation. Functionally, isomerization of 3-trans,5-cis-dienoyl-CoA to 2-trans,4-trans-dienoyl-CoA. The chain is Delta(3,5)-Delta(2,4)-dienoyl-CoA isomerase, mitochondrial (ech1) from Dictyostelium discoideum (Social amoeba).